Reading from the N-terminus, the 42-residue chain is Delta-hexatoxin-Iw1a (42 aa).

Cystine bridges form between cysteine 1–cysteine 15, cysteine 8–cysteine 20, cysteine 14–cysteine 31, and cysteine 16–cysteine 42.

Belongs to the neurotoxin 06 (delta-actx) family. In terms of tissue distribution, expressed by the venom gland.

The protein resides in the secreted. In terms of biological role, inhibits tetrodotoxin-sensitive sodium channels by binding to site 3. It slows the inactivation, causes a prolongation of action potential duration resulting in repetitive firing in autonomic and motor nerve fibers. Does not depolarize the resting potential. Does not affect tetrodotoxin-resistant sodium channels. This lethal neurotoxin is active on both insect and mammalian voltage-gated sodium channels (Nav). This Illawarra wisharti (Illawarra funnel-web spider) protein is Delta-hexatoxin-Iw1a.